The primary structure comprises 131 residues: Large ribosomal subunit protein bL17 (131 aa).

Belongs to the bacterial ribosomal protein bL17 family. Part of the 50S ribosomal subunit. Contacts protein L32.

The sequence is that of Large ribosomal subunit protein bL17 from Cupriavidus necator (strain ATCC 17699 / DSM 428 / KCTC 22496 / NCIMB 10442 / H16 / Stanier 337) (Ralstonia eutropha).